Consider the following 3590-residue polypeptide: MNTNLYRLVFSHVRGMLVPVSEHCTVGNTFCGRTRGQARSGARATSLSVAPNALAWALMLACTGLPLVTHAQGLVPQGQTQVLQGGNKVPVVNIADPNSGGVSHNKFQQFNVANPGVVFNNGLTDGVSRIGGALTKNPNLTRQASAILAEVTDTSPSRLAGTLEVYGKGADLIIANPNGISVNGLSTLNASNLTLTTGRPSVNGGRIGLDVQQGTVTIERGGVNATGLGYFDVVARLVKLQGAVSSKQGKPLADIAVVAGANRYDHATRRATPIAAGARGAAAGAYAIDGTAAGAMYGKHITLVSSDSGLGVRQLGSLSSPSAITVSSQGEIALGDATVQRGPLSLKGAGVVSAGKLASGGGAVNVAGGGAVKIASASSVGNLAVQGGGKVQATLLNAGGTLLVSGRQAVQLGAASSRQALSVNAGGALKADKLSATRRVDVDGKQAVALGSASSNALSVRAGGALKAGKLSATGRLDVDGKQAVTLGSVASDGALSVSAGGNLRAKQLVSSAQLEVRGQREVALDDASSARGMTVVAAGALAARNLQSKGAIGVQGGEAVSVANANSDAELRVRGRGQVDLHDLSAARGADISGEGRVNIGRARSDSDVKVSAHGALSIDSMTALGAIGVQAGGSVSAKDMRSRGAVTVSGGGAVNLGDVQSDGQVRATSAGAMTVRDVAAAADLALQAGDALQAGFLKSAGAMTVNGRDAVRLDGAHAGGQLRVSSDGQAALGSLAAKGELTVSAARAATVAELKSLDNISVTGGERVSVQSVNSASRVAISAHGALDVGKVSAKSGIGLEGWGAVGADSLGSDGAISVSGRDAVRVDQARSLADISLGAEGGATLGAVEAAGSIDVRGGSTVAANSLHANRDVRVSGKDAVRVTAATSGGGLHVSSGRQLDLGAVQARGALALDGGAGVALQSAKASGTLHVQGGEHLDLGTLAAVGAVDVNGTGDVRVAKLVSDAGADLQAGRSMTLGIVDTTGDLQARAQQKLELGSVKSDGGLQAAAGGALSLAAAEVAGALELSGQGVTVDRASASRARIDSTGSVGIGALKAGAVEAASPRRARRALRQDFFTPGSVVVRAQGNVTVGRGDPHQGVLAQGDIIMDAKGGTLLLRNDALTENGTVTISADSAVLEHSTIESKISQSVLAAKGDKGKPAVSVKVAKKLFLNGTLRAVNDNNETMSGRQIDVVDGRPQITDAVTGEARKDESVVSDAALVADGGPIVVEAGELVSHAGGIGNGRNKENGASVTVRTTGNLVNKGYISAGKQGVLEVGGALTNEFLVGSDGTQRIEAQRIENRGTFQSQAPAGTAGALVVKAAEAIVHDGVMATKGEMQIAGKGGGSPTVTAGAKATTSANKLSVDVASWDNAGSLDIKKGGAQVTVAGRYAEHGEVSIQGDYTVSADAIALAAQVTQRGGAANLTSRHDTRFSNKIRLMGPLQVNAGGAVSNTGNLKVREGVTVTAASFDNETGAEVMAKSATLTTSGAARNAGKMQVKEAATIVAASVSNPGTFTAGKDITVTSRGGFDNEGKMESNKDIVIKTEQFSNGRVLDAKHDLTVTASGQADNRGSLKAGHDFTVQAQRIDNSGTMAAGHDATLKAPHLRNTGQVVAGHDIHIINSAKLENTGRVDARNDIALDVADFTNTGSLYAEHDATLTLAQGTQRDLVVDQDHILPVAEGTLRVKAKSLTTEIETGNPGSLIAEVQENIDNKQAIVVGKDLTLSSAHGNVANEANALLWAAGELTVKAQNITNKRAALIEAGGNARLTAAVALLNKLGRIRAGEDMHLDAPRIENTAKLSGEVQRKGVQDVGGGEHGRWSGIGYVNYWLRAGNGKKAGTIAAPWYGGDLTAEQSLIEVGKDLYLNAGARKDEHRHLLNEGVIQAGGHGHIGGDVDNRSVVRTVSAMEYFKTPLPVSLTALDNRAGLSPATWNFQSTYELLDYLLDQNRYEYIWGLYPTYTEWSVNTLKNLDLGYQAKPAPTAPPMPKAPELDLRGHTLESAEGRKIFGEYKKLQGEYEKAKMAVQAVEAYGEATRRVHDQLGQRYGKALGGMDAETKEVDGIIQEFAADLRTVYAKQADQATIDAETDKVAQRYKSQIDAVRLQAIQPGRVTLAKALSAALGADWRALGHSQLMQRWKDFKAGKRGAEIAFYPKEQTVLAAGAGLTLSNGAIHNGENAAQNRGRPEGLKIGAHSATSVSGSFDALRDVGLEKRLDIDDALAAVLVNPHIFTRIGAAQTSLADGAAGPALARQARQAPETDGMVDARGLGSADALASLASLDAAQGLEVSGRRNAQVADAGLAGPSAVAAPAVGAADVGVEPVTGDQVDQPVVAVGLEQPVATVRVAPPAVALPRPLFETRIKFIDQSKFYGSRYFFEQIGYKPDRAARVAGDNYFDTTLVREQVRRALGGYESRLPVRGVALVAKLMDSAGTVGKALGLKVGVAPTAQQLKQADRDFVWYVDTVIDGQKVLAPRLYLTEATRQGITDQYAGGGALIASGGDVTVNTDGHDVSSVNGLIQGRSVKVDAGKGKVVVADSKGAGGGIEADDEVDVSGRDIGIEGGKLRGKDVRLKADTVKVATSMRYDDKGRLAARGDGALDAQGGQLHIEAKRLETAGATLKGGKVKLDVDDVKLGGVYEAGSSYENKSSTPLGSLFAILSSTTETNQSAHANHYGTRIEAGTLEGKMQNLEIEGGSVDAAHTDLSVARDARFKAAADFAHAEHEKDVRQLSLGAKVGAGGYEAGFSLGSESGLEAHAGRGMTAGAEVKVGYRASHEQSSETEKSYRNANLNFGGGSVEAGNVLDIGGADINRNRYGGAAKGNAGTEEALRMRAKKVESTKYVSEQTSQSSGWSVEVASTASARSSLLTAATRLGDSVAQNVEDGREIRGELMAAQVAAEATQLVTADTAAVALSAGISADFDSSHSRSTSQNTQYLGGNLSIEATEGDATLVGAKFGGGDQVSLKAAKSVNLMAAESTFESYSESHNFHASADANLGANAVQGAVGLGLTAGMGTSHQITNETGKTYAGTSVDAANVSIDAGKDLNLSGSRVRGKHVVLDVEGDINATSKQDERNYNSSGGGWDASAGVAIQNRTLVAPVGSAGFNFNTEHDNSRLTNDGAAGVVASDGLTGHVKGDANLTGATIADLSGKGNLKVDGAVNAQNLKDYRDKDGGSGGLNVGISSTTLAPTVGVAFGRVAGEDYQAEQRATIDVGQTKDPARLQVGGGVKGTLNQDAAQATVVQRNKHWAGGGSEFSVAGKSLKKKNQVRPVETPTPDVVDGPPSRPTTPPASPQPIRATVEVSSPPPVSVATVEVVPRPKVETAQPLPPRPVAAQVVPVTPPKVEVAKVEVVPRPKVETAQPLPPRPVVAEKVTTPAVQPQLAKVETVQPVKPETTKPLPKPLPVAKVTKAPPPVVETAQPLPPVKPQKATPGPVAEVGKATVTTVQVQSAPPKPAPVAKQPAPAPKPKPKPKPKAERPKPGKTTPLSGRHVVQQQVQVLQRQASDINNTKSLPGGKLPKPVTVKLTDENGKPQTYTINRREDLMKLNGKVLSTKTTLGLEQTFRLRVEDIGGKNYRVFYETNK.

2 disordered regions span residues 3256 to 3309 (GGGS…VEVS) and 3417 to 3498 (APPP…GRHV). The segment covering 3289–3299 (PSRPTTPPASP) has biased composition (pro residues). The span at 3300 to 3309 (QPIRATVEVS) shows a compositional bias: low complexity. A compositionally biased stretch (pro residues) spans 3417 to 3432 (APPPVVETAQPLPPVK).

It is found in the cell surface. Functionally, evidence for a role in host-cell binding and infection. This Bordetella pertussis (strain Tohama I / ATCC BAA-589 / NCTC 13251) protein is Filamentous hemagglutinin (fhaB).